Consider the following 112-residue polypeptide: Large ribosomal subunit protein bL17 (112 aa).

This sequence belongs to the bacterial ribosomal protein bL17 family. Part of the 50S ribosomal subunit. Contacts protein L32.

The protein is Large ribosomal subunit protein bL17 of Heliobacterium modesticaldum (strain ATCC 51547 / Ice1).